The chain runs to 119 residues: Holo-[acyl-carrier-protein] synthase (119 aa).

2 residues coordinate Mg(2+): aspartate 8 and glutamate 58.

This sequence belongs to the P-Pant transferase superfamily. AcpS family. Mg(2+) serves as cofactor.

Its subcellular location is the cytoplasm. The catalysed reaction is apo-[ACP] + CoA = holo-[ACP] + adenosine 3',5'-bisphosphate + H(+). Its function is as follows. Transfers the 4'-phosphopantetheine moiety from coenzyme A to a Ser of acyl-carrier-protein. This chain is Holo-[acyl-carrier-protein] synthase, found in Streptococcus suis (strain 05ZYH33).